We begin with the raw amino-acid sequence, 618 residues long: DNA mismatch repair protein MutL (618 aa).

Residues 366 to 378 (AEPTAAREPATPR) are compositionally biased toward low complexity. The disordered stretch occupies residues 366 to 403 (AEPTAAREPATPRYSDGASGGNGGRQSAGGWPHAQPGY). A compositionally biased stretch (gly residues) spans 383-392 (ASGGNGGRQS).

Belongs to the DNA mismatch repair MutL/HexB family.

This protein is involved in the repair of mismatches in DNA. It is required for dam-dependent methyl-directed DNA mismatch repair. May act as a 'molecular matchmaker', a protein that promotes the formation of a stable complex between two or more DNA-binding proteins in an ATP-dependent manner without itself being part of a final effector complex. This chain is DNA mismatch repair protein MutL, found in Salmonella typhi.